Consider the following 418-residue polypeptide: UDP-N-acetylglucosamine 1-carboxyvinyltransferase (418 aa).

Phosphoenolpyruvate is bound at residue 22-23; sequence KN. UDP-N-acetyl-alpha-D-glucosamine is bound at residue Arg92. Catalysis depends on Cys116, which acts as the Proton donor. Cys116 is modified (2-(S-cysteinyl)pyruvic acid O-phosphothioketal). Residues 121 to 125, Asp305, and Leu327 contribute to the UDP-N-acetyl-alpha-D-glucosamine site; that span reads RPIDL.

Belongs to the EPSP synthase family. MurA subfamily.

The protein localises to the cytoplasm. It catalyses the reaction phosphoenolpyruvate + UDP-N-acetyl-alpha-D-glucosamine = UDP-N-acetyl-3-O-(1-carboxyvinyl)-alpha-D-glucosamine + phosphate. Its pathway is cell wall biogenesis; peptidoglycan biosynthesis. Cell wall formation. Adds enolpyruvyl to UDP-N-acetylglucosamine. This Campylobacter jejuni subsp. doylei (strain ATCC BAA-1458 / RM4099 / 269.97) protein is UDP-N-acetylglucosamine 1-carboxyvinyltransferase.